Here is a 393-residue protein sequence, read N- to C-terminus: Glycerol-3-phosphate dehydrogenase [NAD(+)] 1 (393 aa).

Residues Gly45–Gly50, Phe133, Lys157, and Ala190 each bind NAD(+). Lys157 provides a ligand contact to substrate. The active-site Proton acceptor is the Lys250. NAD(+) is bound by residues Arg316 and Gln345. Substrate is bound at residue Arg316–Asn317.

It belongs to the NAD-dependent glycerol-3-phosphate dehydrogenase family.

It catalyses the reaction sn-glycerol 3-phosphate + NAD(+) = dihydroxyacetone phosphate + NADH + H(+). The polypeptide is Glycerol-3-phosphate dehydrogenase [NAD(+)] 1 (gpd1) (Cyberlindnera jadinii (Torula yeast)).